The following is a 343-amino-acid chain: 4-hydroxy-2-oxovalerate aldolase 2 (343 aa).

The region spanning 5 to 255 (ITIVDTTLRD…DTGVDLFPLI (251 aa)) is the Pyruvate carboxyltransferase domain. Residues 13–14 (RD), Ser167, and His194 contribute to the substrate site. Asp14 is a Mn(2+) binding site. Residues His194 and His196 each contribute to the Mn(2+) site. Tyr285 contributes to the substrate binding site.

Belongs to the 4-hydroxy-2-oxovalerate aldolase family.

The catalysed reaction is (S)-4-hydroxy-2-oxopentanoate = acetaldehyde + pyruvate. This Rhodococcus jostii (strain RHA1) protein is 4-hydroxy-2-oxovalerate aldolase 2.